Here is a 712-residue protein sequence, read N- to C-terminus: Follistatin-like domain-containing protein DDB_G0289517 (712 aa).

The signal sequence occupies residues 1–21; the sequence is MKIQTIIQIVLISFLFLNVES. An N-linked (GlcNAc...) asparagine glycan is attached at N102. A disordered region spans residues 181–400; it reads DIYNHLNPDS…SSSPVHQDPC (220 aa). Residues 192 to 203 are compositionally biased toward basic and acidic residues; the sequence is QFKDKPNHENHK. A compositionally biased stretch (basic residues) spans 204-214; the sequence is KDKNNKKHKKD. Residues N217 and N234 are each glycosylated (N-linked (GlcNAc...) asparagine). Over residues 220 to 251 the composition is skewed to low complexity; that stretch reads DKNNNNNNNNNNKKNKTINNNEPNQNQQSNPI. The span at 254-269 shows a compositional bias: polar residues; the sequence is TFNNETPFPWNFKNQD. A compositionally biased stretch (low complexity) spans 270 to 281; that stretch reads QQQQKQEQTQKQ. A compositionally biased stretch (polar residues) spans 301–321; that stretch reads KEPTTHLNTIEPTSFTASASR. A compositionally biased stretch (acidic residues) spans 330–339; it reads KDEENIDENN. Over residues 352 to 364 the composition is skewed to basic and acidic residues; it reads DDKSKKPKDDEKH. N-linked (GlcNAc...) asparagine glycosylation occurs at N369. The span at 374 to 384 shows a compositional bias: acidic residues; it reads PADDPSIEITE. The segment covering 386 to 395 has biased composition (polar residues); the sequence is PTITPSSSPV. Follistatin-like domains follow at residues 399–421 and 471–494; these read PCKKATCPNGSHCLVYGNQAYCK and TCSTIKCEDDEVCINKVGLNPYCQ. The N-linked (GlcNAc...) asparagine glycan is linked to N407. Residues N505, N524, and N566 are each glycosylated (N-linked (GlcNAc...) asparagine). The 23-residue stretch at 596–618 folds into the Follistatin-like 3 domain; the sequence is SCETLLCEGVNSYCVENGGPICK. The N-linked (GlcNAc...) asparagine glycan is linked to N622. Follistatin-like domains follow at residues 660–682 and 687–710; these read SCSVIQCPDNQYCVNTDKGPKCY and ECSNSRCPRDYTCKRDEIRGGACL.

It localises to the secreted. In Dictyostelium discoideum (Social amoeba), this protein is Follistatin-like domain-containing protein DDB_G0289517.